Consider the following 197-residue polypeptide: Dephospho-CoA kinase (197 aa).

One can recognise a DPCK domain in the interval 3 to 197; the sequence is VYGLTGGIGS…QSLLHTHQNT (195 aa). Residue 11 to 16 coordinates ATP; that stretch reads GSGKTT.

Belongs to the CoaE family.

It is found in the cytoplasm. It carries out the reaction 3'-dephospho-CoA + ATP = ADP + CoA + H(+). Its pathway is cofactor biosynthesis; coenzyme A biosynthesis; CoA from (R)-pantothenate: step 5/5. Functionally, catalyzes the phosphorylation of the 3'-hydroxyl group of dephosphocoenzyme A to form coenzyme A. The chain is Dephospho-CoA kinase from Hydrogenovibrio crunogenus (strain DSM 25203 / XCL-2) (Thiomicrospira crunogena).